The sequence spans 355 residues: Methylthioribose-1-phosphate isomerase (355 aa).

Residues 50-52, Arg93, and Gln198 each bind substrate; that span reads RGA. The active-site Proton donor is the Asp239. Residue 249–250 participates in substrate binding; it reads NK.

This sequence belongs to the eIF-2B alpha/beta/delta subunits family. MtnA subfamily. In terms of assembly, homodimer.

It catalyses the reaction 5-(methylsulfanyl)-alpha-D-ribose 1-phosphate = 5-(methylsulfanyl)-D-ribulose 1-phosphate. The protein operates within amino-acid biosynthesis; L-methionine biosynthesis via salvage pathway; L-methionine from S-methyl-5-thio-alpha-D-ribose 1-phosphate: step 1/6. Its function is as follows. Catalyzes the interconversion of methylthioribose-1-phosphate (MTR-1-P) into methylthioribulose-1-phosphate (MTRu-1-P). This is Methylthioribose-1-phosphate isomerase from Geobacillus kaustophilus (strain HTA426).